The sequence spans 189 residues: Peptidyl-tRNA hydrolase (189 aa).

Residue Y15 coordinates tRNA. Catalysis depends on H20, which acts as the Proton acceptor. The tRNA site is built by F66, N68, and N114.

The protein belongs to the PTH family. As to quaternary structure, monomer.

It is found in the cytoplasm. The enzyme catalyses an N-acyl-L-alpha-aminoacyl-tRNA + H2O = an N-acyl-L-amino acid + a tRNA + H(+). Its function is as follows. Hydrolyzes ribosome-free peptidyl-tRNAs (with 1 or more amino acids incorporated), which drop off the ribosome during protein synthesis, or as a result of ribosome stalling. Functionally, catalyzes the release of premature peptidyl moieties from peptidyl-tRNA molecules trapped in stalled 50S ribosomal subunits, and thus maintains levels of free tRNAs and 50S ribosomes. This chain is Peptidyl-tRNA hydrolase, found in Streptococcus thermophilus (strain CNRZ 1066).